Here is a 653-residue protein sequence, read N- to C-terminus: Chaperone protein DnaK (653 aa).

At Thr-198 the chain carries Phosphothreonine; by autocatalysis. Residues 608 to 617 (DPEAAAHAAG) show a composition bias toward low complexity. A disordered region spans residues 608–653 (DPEAAAHAAGMHGGAATGGGDGANKHGKGAEDVVEAEFEEVNDDKK). Over residues 618-629 (MHGGAATGGGDG) the composition is skewed to gly residues. Positions 639–653 (DVVEAEFEEVNDDKK) are enriched in acidic residues.

This sequence belongs to the heat shock protein 70 family.

In terms of biological role, acts as a chaperone. This Magnetococcus marinus (strain ATCC BAA-1437 / JCM 17883 / MC-1) protein is Chaperone protein DnaK.